A 370-amino-acid polypeptide reads, in one-letter code: Phenylalanine dehydrogenase (370 aa).

An NAD(+)-binding site is contributed by Arg44. Lys68 is a binding site for L-phenylalanine. The active-site Proton donor/acceptor is Lys80. 114 to 115 serves as a coordination point for L-phenylalanine; the sequence is TD. Residues Asp115, Ser146, Thr150, 180-186, 203-204, 243-244, and 264-266 contribute to the NAD(+) site; these read GLGKVGF, DV, AI, and AAN. Asn266 contacts L-phenylalanine.

This sequence belongs to the Glu/Leu/Phe/Val dehydrogenases family.

The enzyme catalyses L-phenylalanine + NAD(+) + H2O = 3-phenylpyruvate + NH4(+) + NADH + H(+). The protein operates within amino-acid biosynthesis; L-phenylalanine biosynthesis; L-phenylalanine from phenylpyruvate (PDH route): step 1/1. Functionally, catalyzes the reversible NAD(+)-dependent oxidative deamination of L-phenylalanine to phenylpyruvate. This is Phenylalanine dehydrogenase from Caldalkalibacillus thermarum (strain TA2.A1).